A 405-amino-acid chain; its full sequence is Imidazolonepropionase (405 aa).

The Fe(3+) site is built by H72 and H74. Zn(2+) contacts are provided by H72 and H74. 3 residues coordinate 4-imidazolone-5-propanoate: R81, Y144, and H177. Y144 provides a ligand contact to N-formimidoyl-L-glutamate. Residue H242 coordinates Fe(3+). Zn(2+) is bound at residue H242. A 4-imidazolone-5-propanoate-binding site is contributed by Q245. D317 is a binding site for Fe(3+). D317 is a Zn(2+) binding site. Residues N319 and G321 each contribute to the N-formimidoyl-L-glutamate site. Residue T322 coordinates 4-imidazolone-5-propanoate.

The protein belongs to the metallo-dependent hydrolases superfamily. HutI family. It depends on Zn(2+) as a cofactor. Fe(3+) serves as cofactor.

It localises to the cytoplasm. It carries out the reaction 4-imidazolone-5-propanoate + H2O = N-formimidoyl-L-glutamate. It participates in amino-acid degradation; L-histidine degradation into L-glutamate; N-formimidoyl-L-glutamate from L-histidine: step 3/3. In terms of biological role, catalyzes the hydrolytic cleavage of the carbon-nitrogen bond in imidazolone-5-propanoate to yield N-formimidoyl-L-glutamate. It is the third step in the universal histidine degradation pathway. The protein is Imidazolonepropionase of Klebsiella pneumoniae subsp. pneumoniae (strain ATCC 700721 / MGH 78578).